We begin with the raw amino-acid sequence, 784 residues long: LPS-assembly protein LptD (784 aa).

Residues 1–24 (MKKRIPTLLATMIATALYSQQGLA) form the signal peptide. Cystine bridges form between C31–C724 and C173–C725.

The protein belongs to the LptD family. As to quaternary structure, component of the lipopolysaccharide transport and assembly complex. Interacts with LptE and LptA. Post-translationally, contains two intramolecular disulfide bonds.

Its subcellular location is the cell outer membrane. Its function is as follows. Together with LptE, is involved in the assembly of lipopolysaccharide (LPS) at the surface of the outer membrane. The chain is LPS-assembly protein LptD from Shigella dysenteriae serotype 1 (strain Sd197).